A 223-amino-acid chain; its full sequence is Putative nudix hydrolase 2 (223 aa).

Positions 72-213 (ASADGVSIIA…SIVVESTLLA (142 aa)) constitute a Nudix hydrolase domain. The short motif at 111 to 132 (GLIDAGETAQQAAIRELKEETG) is the Nudix box element. Residues Glu-126 and Glu-130 each contribute to the Mg(2+) site.

This sequence belongs to the Nudix hydrolase family. Requires Mg(2+) as cofactor. It depends on Mn(2+) as a cofactor.

Its function is as follows. Probably mediates the hydrolysis of some nucleoside diphosphate derivatives. In Caenorhabditis elegans, this protein is Putative nudix hydrolase 2 (ndx-2).